The following is a 475-amino-acid chain: UDP-N-acetylmuramate--L-alanine ligase (475 aa).

112 to 118 is an ATP binding site; sequence GTHGKTT.

This sequence belongs to the MurCDEF family.

Its subcellular location is the cytoplasm. The enzyme catalyses UDP-N-acetyl-alpha-D-muramate + L-alanine + ATP = UDP-N-acetyl-alpha-D-muramoyl-L-alanine + ADP + phosphate + H(+). It participates in cell wall biogenesis; peptidoglycan biosynthesis. In terms of biological role, cell wall formation. This chain is UDP-N-acetylmuramate--L-alanine ligase, found in Paracidovorax citrulli (strain AAC00-1) (Acidovorax citrulli).